The primary structure comprises 284 residues: Bifunctional protein FolD 1 (284 aa).

NADP(+) contacts are provided by residues 166–168 (GAS) and I232.

It belongs to the tetrahydrofolate dehydrogenase/cyclohydrolase family. Homodimer.

It catalyses the reaction (6R)-5,10-methylene-5,6,7,8-tetrahydrofolate + NADP(+) = (6R)-5,10-methenyltetrahydrofolate + NADPH. It carries out the reaction (6R)-5,10-methenyltetrahydrofolate + H2O = (6R)-10-formyltetrahydrofolate + H(+). The protein operates within one-carbon metabolism; tetrahydrofolate interconversion. Its function is as follows. Catalyzes the oxidation of 5,10-methylenetetrahydrofolate to 5,10-methenyltetrahydrofolate and then the hydrolysis of 5,10-methenyltetrahydrofolate to 10-formyltetrahydrofolate. This chain is Bifunctional protein FolD 1, found in Pseudomonas syringae pv. tomato (strain ATCC BAA-871 / DC3000).